The following is an 84-amino-acid chain: DNA-directed RNA polymerase subunit Rpo5 (84 aa).

It belongs to the archaeal Rpo5/eukaryotic RPB5 RNA polymerase subunit family. Part of the RNA polymerase complex.

The protein resides in the cytoplasm. It catalyses the reaction RNA(n) + a ribonucleoside 5'-triphosphate = RNA(n+1) + diphosphate. Functionally, DNA-dependent RNA polymerase (RNAP) catalyzes the transcription of DNA into RNA using the four ribonucleoside triphosphates as substrates. This chain is DNA-directed RNA polymerase subunit Rpo5, found in Sulfurisphaera tokodaii (strain DSM 16993 / JCM 10545 / NBRC 100140 / 7) (Sulfolobus tokodaii).